The primary structure comprises 288 residues: Proteasome assembly chaperone 1 (288 aa).

Ala-2 carries the post-translational modification N-acetylalanine. The segment at 13–35 (PCRAGTEDEEEEEEGRRETPEDR) is disordered. Thr-18 carries the phosphothreonine modification. Over residues 26–35 (EGRRETPEDR) the composition is skewed to basic and acidic residues. Position 54 is a phosphothreonine (Thr-54). Residue Ser-180 is modified to Phosphoserine. Lys-264 bears the N6-acetyllysine mark.

Belongs to the PSMG1 family. Forms a heterodimer with PSMG2. The PSMG1-PSMG2 heterodimer interacts directly with the PSMA5 and PSMA7 proteasome alpha subunits. Degraded by the proteasome upon completion of 20S proteasome maturation. As to expression, in the adult, detected in brain, colon, leukocytes, breast and testis. Widely expressed in the fetus. Also expressed in a variety of proliferating cell lines.

It localises to the cytoplasm. The protein localises to the endoplasmic reticulum. Its function is as follows. Chaperone protein which promotes assembly of the 20S proteasome as part of a heterodimer with PSMG2. The PSMG1-PSMG2 heterodimer binds to the PSMA5 and PSMA7 proteasome subunits, promotes assembly of the proteasome alpha subunits into the heteroheptameric alpha ring and prevents alpha ring dimerization. This is Proteasome assembly chaperone 1 from Homo sapiens (Human).